The sequence spans 291 residues: Elongation factor Ts (291 aa).

The segment at 82-85 is involved in Mg(2+) ion dislocation from EF-Tu; it reads TDFC.

It belongs to the EF-Ts family.

Its subcellular location is the cytoplasm. Associates with the EF-Tu.GDP complex and induces the exchange of GDP to GTP. It remains bound to the aminoacyl-tRNA.EF-Tu.GTP complex up to the GTP hydrolysis stage on the ribosome. This is Elongation factor Ts from Methylobacillus flagellatus (strain ATCC 51484 / DSM 6875 / VKM B-1610 / KT).